Here is a 397-residue protein sequence, read N- to C-terminus: Nuclear egress protein 2 (397 aa).

Topologically, residues 1 to 358 (MEMNKVLHQD…GPSRPQSGPW (358 aa)) are perinuclear space. Disordered regions lie at residues 205 to 245 (RTAG…PPPP) and 291 to 332 (AAAG…PSLE). The residue at position 216 (serine 216) is a Phosphoserine. 2 stretches are compositionally biased toward low complexity: residues 224–239 (PSCS…AAAG) and 291–301 (AAAGQDVGGSA). The span at 310 to 322 (SRRRGVSTHHRHP) shows a compositional bias: basic residues. Residues 359 to 381 (LPARFATLGPLVLALLLVLALLW) traverse the membrane as a helical segment. The Nuclear portion of the chain corresponds to 382–397 (RGHGQSSSPTRSAHRD).

It belongs to the herpesviridae NEC2 protein family. In terms of assembly, forms a heterohexameric complex with NEC1. Interacts with host UBA7 and RNF170; this interaction promotes UBA7 proteasomal degradation. In terms of processing, phosphorylated. Phosphorylation by viral kinase UL97 at Ser-216 plays an important role for correct viral nuclear egress complex (NEC) localization.

Its subcellular location is the host nucleus inner membrane. Plays an essential role in virion nuclear egress, the first step of virion release from infected cell. Within the host nucleus, NEC1 interacts with the newly formed capsid through the vertexes and directs it to the inner nuclear membrane by associating with NEC2. Induces the budding of the capsid at the inner nuclear membrane as well as its envelopment into the perinuclear space. There, the NEC1/NEC2 complex promotes the fusion of the enveloped capsid with the outer nuclear membrane and the subsequent release of the viral capsid into the cytoplasm where it will reach the secondary budding sites in the host Golgi or trans-Golgi network. Inhibits host ISGylation and subsequent innate antiviral response by targeting host UBA7 for proteasomal degradation. This chain is Nuclear egress protein 2, found in Human cytomegalovirus (strain AD169) (HHV-5).